Here is an 846-residue protein sequence, read N- to C-terminus: Translation initiation factor IF-2 (846 aa).

Residues 198-219 are disordered; sequence YKREEEEKKSKAKKAGGKGFKK. Residues 207–219 are compositionally biased toward basic residues; that stretch reads SKAKKAGGKGFKK. Positions 345-512 constitute a tr-type G domain; it reads SRAPVVTIMG…AVLLQSEVLE (168 aa). The segment at 354–361 is G1; it reads GHVDHGKT. A GTP-binding site is contributed by 354-361; that stretch reads GHVDHGKT. Positions 379 to 383 are G2; that stretch reads GITQH. Residues 400-403 form a G3 region; it reads DTPG. GTP contacts are provided by residues 400 to 404 and 454 to 457; these read DTPGH and NKID. A G4 region spans residues 454 to 457; it reads NKID. Positions 490–492 are G5; the sequence is SAK.

This sequence belongs to the TRAFAC class translation factor GTPase superfamily. Classic translation factor GTPase family. IF-2 subfamily.

The protein resides in the cytoplasm. In terms of biological role, one of the essential components for the initiation of protein synthesis. Protects formylmethionyl-tRNA from spontaneous hydrolysis and promotes its binding to the 30S ribosomal subunits. Also involved in the hydrolysis of GTP during the formation of the 70S ribosomal complex. The protein is Translation initiation factor IF-2 of Francisella tularensis subsp. tularensis (strain SCHU S4 / Schu 4).